A 239-amino-acid chain; its full sequence is EF-hand domain-containing protein D2 (239 aa).

Residues 1 to 51 (MATDELASKLSRRLQMEDEGGEATEQPGLNGAAAAAAEAPDETAQALGSAD) are disordered. Ala2 is subject to N-acetylalanine. At Ser11 the chain carries Phosphoserine. A compositionally biased stretch (low complexity) spans 32 to 46 (AAAAAAEAPDETAQA). Phosphoserine is present on residues Ser73 and Ser75. Tyr82 is modified (phosphotyrosine). EF-hand domains lie at 91 to 126 (KQIK…LGAP) and 127 to 162 (QTHL…AAAG). Positions 104, 108, 115, 140, 142, 144, 146, and 151 each coordinate Ca(2+). Lys232 carries the N6-acetyllysine modification.

As to quaternary structure, interacts with CASP9; with inactive form.

The protein resides in the membrane raft. In terms of biological role, may regulate B-cell receptor (BCR)-induced immature and primary B-cell apoptosis. Plays a role as negative regulator of the canonical NF-kappa-B-activating branch. Controls spontaneous apoptosis through the regulation of BCL2L1 abundance. In Rattus norvegicus (Rat), this protein is EF-hand domain-containing protein D2 (Efhd2).